Here is a 160-residue protein sequence, read N- to C-terminus: Protein cornichon homolog 2 (160 aa).

Residues methionine 1–tyrosine 10 are Cytoplasmic-facing. Residues methionine 11–phenylalanine 31 traverse the membrane as a helical segment. Topologically, residues aspartate 32–tyrosine 72 are lumenal. A helical membrane pass occupies residues serine 73–leucine 93. Over asparagine 94–lysine 138 the chain is Cytoplasmic. Residues leucine 139–serine 159 traverse the membrane as a helical segment. Residue phenylalanine 160 is a topological domain, lumenal.

The protein belongs to the cornichon family. Acts as an auxiliary subunit for AMPA-selective glutamate receptors (AMPARs). Found in a complex with GRIA1, GRIA2, GRIA3, GRIA4, CNIH3, CACNG2, CACNG3, CACNG4, CACNG5, CACNG7 and CACNG8. Interacts with CACGN8. Interacts with GRIA1. Found in a complex with GRIA1, GRIA2, GRIA3, GRIA4, DLG4 and CACNG8. Expression is up-regulated in dorsolateral prefrontal cortex of patients with schizophrenia (postmortem brain study).

It is found in the endoplasmic reticulum membrane. It localises to the postsynaptic cell membrane. The protein localises to the cell projection. The protein resides in the dendrite. Its subcellular location is the dendritic spine. It is found in the postsynaptic density. Its function is as follows. Regulates the trafficking and gating properties of AMPA-selective glutamate receptors (AMPARs). Promotes their targeting to the cell membrane and synapses and modulates their gating properties by regulating their rates of activation, deactivation and desensitization. Blocks CACNG8-mediated resensitization of AMPA receptors. The protein is Protein cornichon homolog 2 of Homo sapiens (Human).